We begin with the raw amino-acid sequence, 366 residues long: Aminomethyltransferase (366 aa).

This sequence belongs to the GcvT family. The glycine cleavage system is composed of four proteins: P, T, L and H.

The catalysed reaction is N(6)-[(R)-S(8)-aminomethyldihydrolipoyl]-L-lysyl-[protein] + (6S)-5,6,7,8-tetrahydrofolate = N(6)-[(R)-dihydrolipoyl]-L-lysyl-[protein] + (6R)-5,10-methylene-5,6,7,8-tetrahydrofolate + NH4(+). Functionally, the glycine cleavage system catalyzes the degradation of glycine. The polypeptide is Aminomethyltransferase (Bacillus mycoides (strain KBAB4) (Bacillus weihenstephanensis)).